The primary structure comprises 261 residues: Kallikrein-1 (261 aa).

Positions 1–18 (MRFLILFLALSLGGIDAA) are cleaved as a signal peptide. A propeptide spans 19-24 (PPVQSR) (activation peptide). A Peptidase S1 domain is found at 25-258 (IVGGFNCEKN…FNTWIRETMA (234 aa)). Intrachain disulfides connect Cys31–Cys173, Cys50–Cys66, Cys152–Cys219, Cys184–Cys198, and Cys209–Cys234. The Charge relay system role is filled by His65. A glycan (N-linked (GlcNAc...) asparagine) is linked at Asn102. Residue Asp120 is the Charge relay system of the active site. Catalysis depends on Ser213, which acts as the Charge relay system.

Belongs to the peptidase S1 family. Kallikrein subfamily.

The catalysed reaction is Preferential cleavage of Arg-|-Xaa bonds in small molecule substrates. Highly selective action to release kallidin (lysyl-bradykinin) from kininogen involves hydrolysis of Met-|-Xaa or Leu-|-Xaa.. Its function is as follows. Glandular kallikreins cleave Met-Lys and Arg-Ser bonds in kininogen to release Lys-bradykinin. The protein is Kallikrein-1 (Klk1) of Mus musculus (Mouse).